The primary structure comprises 583 residues: Thiol:disulfide interchange protein DsbD (583 aa).

The first 18 residues, 1-18 (MRRLFLLLFMLFTTLAHA), serve as a signal peptide directing secretion. Intrachain disulfides connect cysteine 118–cysteine 124 and cysteine 186–cysteine 306. Transmembrane regions (helical) follow at residues 168 to 188 (GLGL…PCSL), 214 to 234 (SYVL…ALLG), 245 to 265 (WVLG…FGFF), 289 to 309 (LIGC…CMTA), 326 to 346 (FGGL…LLLV), 359 to 379 (WMNL…IYML), 382 to 402 (VLNP…VAYC), and 413 to 433 (LLHL…MLLV). A Thioredoxin domain is found at 458 to 581 (VTAHDAFTTV…FLQRWTQTRE (124 aa)). Cysteines 496 and 499 form a disulfide.

This sequence belongs to the thioredoxin family. DsbD subfamily.

The protein localises to the cell inner membrane. The catalysed reaction is [protein]-dithiol + NAD(+) = [protein]-disulfide + NADH + H(+). It catalyses the reaction [protein]-dithiol + NADP(+) = [protein]-disulfide + NADPH + H(+). In terms of biological role, required to facilitate the formation of correct disulfide bonds in some periplasmic proteins and for the assembly of the periplasmic c-type cytochromes. Acts by transferring electrons from cytoplasmic thioredoxin to the periplasm. This transfer involves a cascade of disulfide bond formation and reduction steps. This chain is Thiol:disulfide interchange protein DsbD, found in Pseudomonas fluorescens (strain ATCC BAA-477 / NRRL B-23932 / Pf-5).